A 316-amino-acid polypeptide reads, in one-letter code: Beta-ketoacyl-[acyl-carrier-protein] synthase III (316 aa).

Catalysis depends on residues cysteine 112 and histidine 243. An ACP-binding region spans residues 244 to 248 (QANLR). Residue asparagine 273 is part of the active site.

The protein belongs to the thiolase-like superfamily. FabH family. In terms of assembly, homodimer.

It is found in the cytoplasm. It carries out the reaction malonyl-[ACP] + acetyl-CoA + H(+) = 3-oxobutanoyl-[ACP] + CO2 + CoA. The protein operates within lipid metabolism; fatty acid biosynthesis. Its function is as follows. Catalyzes the condensation reaction of fatty acid synthesis by the addition to an acyl acceptor of two carbons from malonyl-ACP. Catalyzes the first condensation reaction which initiates fatty acid synthesis and may therefore play a role in governing the total rate of fatty acid production. Possesses both acetoacetyl-ACP synthase and acetyl transacylase activities. Its substrate specificity determines the biosynthesis of branched-chain and/or straight-chain of fatty acids. This Histophilus somni (strain 129Pt) (Haemophilus somnus) protein is Beta-ketoacyl-[acyl-carrier-protein] synthase III.